Here is a 217-residue protein sequence, read N- to C-terminus: Pyridoxine/pyridoxamine 5'-phosphate oxidase (217 aa).

Residues 13–16 and lysine 71 contribute to the substrate site; that span reads RREY. Residues 66 to 71, 81 to 82, arginine 87, lysine 88, and glutamine 110 each bind FMN; these read RIVLLK and YT. Substrate is bound by residues tyrosine 128, arginine 132, and serine 136. FMN contacts are provided by residues 145–146 and tryptophan 190; that span reads QS. 196-198 contacts substrate; that stretch reads RLH. Residue arginine 200 coordinates FMN.

This sequence belongs to the pyridoxamine 5'-phosphate oxidase family. In terms of assembly, homodimer. FMN is required as a cofactor.

The enzyme catalyses pyridoxamine 5'-phosphate + O2 + H2O = pyridoxal 5'-phosphate + H2O2 + NH4(+). It carries out the reaction pyridoxine 5'-phosphate + O2 = pyridoxal 5'-phosphate + H2O2. It participates in cofactor metabolism; pyridoxal 5'-phosphate salvage; pyridoxal 5'-phosphate from pyridoxamine 5'-phosphate: step 1/1. Its pathway is cofactor metabolism; pyridoxal 5'-phosphate salvage; pyridoxal 5'-phosphate from pyridoxine 5'-phosphate: step 1/1. Its function is as follows. Catalyzes the oxidation of either pyridoxine 5'-phosphate (PNP) or pyridoxamine 5'-phosphate (PMP) into pyridoxal 5'-phosphate (PLP). The chain is Pyridoxine/pyridoxamine 5'-phosphate oxidase from Yersinia pestis bv. Antiqua (strain Antiqua).